The chain runs to 155 residues: Endoribonuclease YbeY (155 aa).

His117, His121, and His127 together coordinate Zn(2+).

It belongs to the endoribonuclease YbeY family. It depends on Zn(2+) as a cofactor.

The protein resides in the cytoplasm. Functionally, single strand-specific metallo-endoribonuclease involved in late-stage 70S ribosome quality control and in maturation of the 3' terminus of the 16S rRNA. The protein is Endoribonuclease YbeY of Dichelobacter nodosus (strain VCS1703A).